The primary structure comprises 115 residues: Phosphoribosyl-AMP cyclohydrolase (115 aa).

D80 lines the Mg(2+) pocket. Zn(2+) is bound at residue C81. 2 residues coordinate Mg(2+): D82 and D84. Positions 97 and 104 each coordinate Zn(2+).

This sequence belongs to the PRA-CH family. Homodimer. Requires Mg(2+) as cofactor. It depends on Zn(2+) as a cofactor.

Its subcellular location is the cytoplasm. It carries out the reaction 1-(5-phospho-beta-D-ribosyl)-5'-AMP + H2O = 1-(5-phospho-beta-D-ribosyl)-5-[(5-phospho-beta-D-ribosylamino)methylideneamino]imidazole-4-carboxamide. It participates in amino-acid biosynthesis; L-histidine biosynthesis; L-histidine from 5-phospho-alpha-D-ribose 1-diphosphate: step 3/9. Catalyzes the hydrolysis of the adenine ring of phosphoribosyl-AMP. The chain is Phosphoribosyl-AMP cyclohydrolase from Rhodococcus erythropolis (strain PR4 / NBRC 100887).